A 942-amino-acid chain; its full sequence is Isoleucine--tRNA ligase (942 aa).

The 'HIGH' region signature appears at 58 to 68 (PYANGDIHLGH). L-isoleucyl-5'-AMP is bound at residue Glu-567. Residues 608–612 (KMSKS) carry the 'KMSKS' region motif. ATP is bound at residue Lys-611. The Zn(2+) site is built by Cys-905, Cys-908, Cys-925, and Cys-928.

The protein belongs to the class-I aminoacyl-tRNA synthetase family. IleS type 1 subfamily. In terms of assembly, monomer. The cofactor is Zn(2+).

The protein resides in the cytoplasm. The enzyme catalyses tRNA(Ile) + L-isoleucine + ATP = L-isoleucyl-tRNA(Ile) + AMP + diphosphate. Catalyzes the attachment of isoleucine to tRNA(Ile). As IleRS can inadvertently accommodate and process structurally similar amino acids such as valine, to avoid such errors it has two additional distinct tRNA(Ile)-dependent editing activities. One activity is designated as 'pretransfer' editing and involves the hydrolysis of activated Val-AMP. The other activity is designated 'posttransfer' editing and involves deacylation of mischarged Val-tRNA(Ile). In Pseudoalteromonas translucida (strain TAC 125), this protein is Isoleucine--tRNA ligase.